Here is a 476-residue protein sequence, read N- to C-terminus: Aspartyl/glutamyl-tRNA(Asn/Gln) amidotransferase subunit B (476 aa).

It belongs to the GatB/GatE family. GatB subfamily. Heterotrimer of A, B and C subunits.

It carries out the reaction L-glutamyl-tRNA(Gln) + L-glutamine + ATP + H2O = L-glutaminyl-tRNA(Gln) + L-glutamate + ADP + phosphate + H(+). The catalysed reaction is L-aspartyl-tRNA(Asn) + L-glutamine + ATP + H2O = L-asparaginyl-tRNA(Asn) + L-glutamate + ADP + phosphate + 2 H(+). Functionally, allows the formation of correctly charged Asn-tRNA(Asn) or Gln-tRNA(Gln) through the transamidation of misacylated Asp-tRNA(Asn) or Glu-tRNA(Gln) in organisms which lack either or both of asparaginyl-tRNA or glutaminyl-tRNA synthetases. The reaction takes place in the presence of glutamine and ATP through an activated phospho-Asp-tRNA(Asn) or phospho-Glu-tRNA(Gln). The protein is Aspartyl/glutamyl-tRNA(Asn/Gln) amidotransferase subunit B of Moorella thermoacetica (strain ATCC 39073 / JCM 9320).